Consider the following 147-residue polypeptide: Small ribosomal subunit protein uS12 (147 aa).

Belongs to the universal ribosomal protein uS12 family. As to quaternary structure, part of the 30S ribosomal subunit.

Functionally, with S4 and S5 plays an important role in translational accuracy. Located at the interface of the 30S and 50S subunits. In Methanococcus maripaludis (strain C7 / ATCC BAA-1331), this protein is Small ribosomal subunit protein uS12.